The chain runs to 334 residues: D-alanine--D-alanine ligase (334 aa).

The ATP-grasp domain maps to 111–315; the sequence is KRVCLSHGVP…YEDLCIEILR (205 aa). Position 141–196 (141–196) interacts with ATP; the sequence is AAEFGLPLMLKAPHEGSTIGIAKVETAEGMQAGFDLCAKYEAVVLVEQFVKGRELT. Aspartate 268, glutamate 282, and asparagine 284 together coordinate Mg(2+).

The protein belongs to the D-alanine--D-alanine ligase family. Mg(2+) serves as cofactor. Requires Mn(2+) as cofactor.

It is found in the cytoplasm. It catalyses the reaction 2 D-alanine + ATP = D-alanyl-D-alanine + ADP + phosphate + H(+). Its pathway is cell wall biogenesis; peptidoglycan biosynthesis. Functionally, cell wall formation. The chain is D-alanine--D-alanine ligase from Herminiimonas arsenicoxydans.